The primary structure comprises 84 residues: MLSLRPNCECCDRDLPPDSGDAMICTFECTFCAGCAETKLGGTCPNCGGELVRRPVRPASMLKKYPASTARVLKPQGCAPERAA.

The segment at cysteine 8 to cysteine 47 is cysteine motif.

This is an uncharacterized protein from Rhizobium meliloti (strain 1021) (Ensifer meliloti).